We begin with the raw amino-acid sequence, 331 residues long: Laforin (331 aa).

Residues 1 to 124 form the CBM20 domain; sequence MLFRFGVVVP…NNLVDGVYCL (124 aa). Serine 25 bears the Phosphoserine; by AMPK mark. Residues tryptophan 32, lysine 87, 103-107, aspartate 197, aspartate 235, and arginine 241 contribute to the substrate site; that span reads GPHHD. The region spanning 156 to 323 is the Tyrosine-protein phosphatase domain; that stretch reads HYSRILPNIW…QQDFFQKFGK (168 aa). Residue cysteine 266 is the Phosphocysteine intermediate of the active site. The Glucan phosphatase signature motif CXAGXGR signature appears at 266–272; sequence CNAGVGR. Substrate contacts are provided by residues 267–272 and tyrosine 304; that span reads NAGVGR.

Belongs to the protein-tyrosine phosphatase family. Homodimer. Interacts with itself. Interacts with PPP1R3B, PPP1R3C, PPP1R3D, HIRIP5, and EPM2AIP1. Binds glycogen and Lafora bodies. Interacts with NHLRC1/malin (via the NHL repeats). Forms a complex with NHLRC1/malin and HSP70. Interacts with PPP1R3D; in the presence of NHLC1/malin the interaction leads to ubiquitination and autophagic degradation of PPP1R3D. Interacts (via the phosphatase domain) with MAPT/Tau; the interaction dephosphorylates MAPT. Interacts with PRDM8. Polyubiquitinated by NHLRC1/malin. Post-translationally, phosphorylation on Ser-25 by AMPK affects the phosphatase activity of the enzyme and its ability to homodimerize and interact with NHLRC1, PPP1R3C or PRKAA2. In terms of tissue distribution, widely expressed.

The protein resides in the cytoplasm. It is found in the endoplasmic reticulum membrane. It localises to the cell membrane. It catalyses the reaction O-phospho-L-tyrosyl-[protein] + H2O = L-tyrosyl-[protein] + phosphate. It carries out the reaction O-phospho-L-seryl-[protein] + H2O = L-seryl-[protein] + phosphate. The catalysed reaction is O-phospho-L-threonyl-[protein] + H2O = L-threonyl-[protein] + phosphate. In terms of biological role, plays an important role in preventing glycogen hyperphosphorylation and the formation of insoluble aggregates, via its activity as glycogen phosphatase, and by promoting the ubiquitination of proteins involved in glycogen metabolism via its interaction with the E3 ubiquitin ligase NHLRC1/malin. Dephosphorylates phosphotyrosine and synthetic substrates, such as para-nitrophenylphosphate (pNPP), and has low activity with phosphoserine and phosphothreonine substrates (in vitro). Has also been shown to dephosphorylate MAPT. Shows strong phosphatase activity towards complex carbohydrates in vitro, avoiding glycogen hyperphosphorylation which is associated with reduced branching and formation of insoluble aggregates. Forms a complex with NHLRC1/malin and HSP70, which suppresses the cellular toxicity of misfolded proteins by promoting their degradation through the ubiquitin-proteasome system (UPS). Acts as a scaffold protein to facilitate PPP1R3C/PTG ubiquitination by NHLRC1/malin. Also promotes proteasome-independent protein degradation through the macroautophagy pathway. The sequence is that of Laforin (Epm2a) from Rattus norvegicus (Rat).